A 379-amino-acid chain; its full sequence is Neutral protease 2 homolog TRV_03208 (379 aa).

A signal peptide spans 1 to 19 (MKFFTALAAVGALLAPALA). Residues 20–187 (LPTPASEEAS…DYFSKSLDKR (168 aa)) constitute a propeptide that is removed on maturation. 2 cysteine pairs are disulfide-bonded: cysteine 193–cysteine 263 and cysteine 270–cysteine 288. Asparagine 221 carries N-linked (GlcNAc...) asparagine glycosylation. Residue histidine 312 participates in Zn(2+) binding. Glutamate 313 is a catalytic residue. Residues histidine 316 and aspartate 327 each coordinate Zn(2+).

This sequence belongs to the peptidase M35 family. Requires Zn(2+) as cofactor.

Its subcellular location is the secreted. It catalyses the reaction Preferential cleavage of bonds with hydrophobic residues in P1'. Also 3-Asn-|-Gln-4 and 8-Gly-|-Ser-9 bonds in insulin B chain.. In terms of biological role, secreted metalloproteinase that allows assimilation of proteinaceous substrates. Shows high activities on basic nuclear substrates such as histone and protamine. May be involved in virulence. The sequence is that of Neutral protease 2 homolog TRV_03208 from Trichophyton verrucosum (strain HKI 0517).